The sequence spans 384 residues: N-acetylneuraminate epimerase (384 aa).

A signal peptide spans 1–24; sequence MNMKTLLTYATLLSVTAFSHVVYA. Kelch repeat units follow at residues 46 to 90, 92 to 145, 147 to 184, 185 to 230, 233 to 281, 303 to 352, and 354 to 383; these read KVYV…SVIG, YIYL…YSPD, RQIL…RIVD, DYMG…VIEG, VTLI…VAGA, QAFE…TTSE, and VLIV…VEVI. E239 functions as the Proton acceptor in the catalytic mechanism.

Belongs to the NanM family. Homodimer.

The protein localises to the periplasm. It catalyses the reaction N-acetyl-alpha-neuraminate = N-acetyl-beta-neuraminate. In terms of biological role, converts alpha-N-acetylneuranimic acid (Neu5Ac) to the beta-anomer, accelerating the equilibrium between the alpha- and beta-anomers. Probably facilitates sialidase-negative bacteria to compete successfully for limited amounts of extracellular Neu5Ac, which is likely taken up in the beta-anomer. In addition, the rapid removal of sialic acid from solution might be advantageous to the bacterium to damp down host responses. This chain is N-acetylneuraminate epimerase, found in Vibrio cholerae serotype O1 (strain ATCC 39315 / El Tor Inaba N16961).